The chain runs to 1010 residues: BrkA autotransporter (1010 aa).

The first 42 residues, 1–42 (MYLDRFRQCPSSLQIPRSAWRLHALAAALALAGMARLAPAAA), serve as a signal peptide directing secretion. The region spanning 742-1010 (LRADAGGPWA…SFHAGYRYSF (269 aa)) is the Autotransporter domain.

The protein localises to the periplasm. The protein resides in the secreted. It localises to the cell surface. Its subcellular location is the cell outer membrane. Functionally, inhibits the classical pathway of complement activation and prevents accumulation of deposited C4. This is BrkA autotransporter from Bordetella pertussis (strain Tohama I / ATCC BAA-589 / NCTC 13251).